The primary structure comprises 106 residues: Large ribosomal subunit protein uL24 (106 aa).

The protein belongs to the universal ribosomal protein uL24 family. Part of the 50S ribosomal subunit.

Functionally, one of two assembly initiator proteins, it binds directly to the 5'-end of the 23S rRNA, where it nucleates assembly of the 50S subunit. One of the proteins that surrounds the polypeptide exit tunnel on the outside of the subunit. The protein is Large ribosomal subunit protein uL24 of Dechloromonas aromatica (strain RCB).